We begin with the raw amino-acid sequence, 455 residues long: MHPFASYVLRTYYKATGWNEDNLYANLTRSSNAVLDFTVPRGLHFTVSKSPNPLFKTTYSMTAMPSLSGSLGYIFTSCDLNVLSSGTVRFKDMLDRFKVYDQPRRPEGKEEEWLAGERVDTRDYLLYGRFYLPSGRLDALYSTRLSPTVQLSVAAISDPISGTPVDGRRRTDPSNIMLNLQHDVGKWCTEYTYSAEDSMWGVRFLHNFGRLAPSSWETTNGENGTNTSAPGNASNSRAGVKRVDEEDAVEGGLRGRVSVGAELYFSAKERSAGVSTGIRFSTMPDATPPSAQIPPPSPFTPDPTTSGPSPALLNPRPYPQPPTTITALFNPMLGHIQSAYTARVSRDLALATRFDFNVYSYDSEWTMGAEWWLRRSPRSSTDSGEEGAEKPSYPSPLGEVHGVVKARASTNNDVSLMWEGRIRQMLVSLGVVSDLSSRAKPIKAIGIEVSYFSSE.

3 disordered regions span residues 216–249, 278–311, and 377–399; these read WETT…EDAV, IRFS…PSPA, and PRSS…PLGE. Low complexity predominate over residues 217-227; sequence ETTNGENGTNT. The span at 228–237 shows a compositional bias: polar residues; sequence SAPGNASNSR. Pro residues predominate over residues 291–301; sequence AQIPPPSPFTP.

The protein belongs to the MDM10 family. Component of the ER-mitochondria encounter structure (ERMES) or MDM complex, composed of MMM1, MDM10, MDM12 and MDM34. Associates with the mitochondrial outer membrane sorting assembly machinery SAM(core) complex.

Its subcellular location is the mitochondrion outer membrane. Functionally, component of the ERMES/MDM complex, which serves as a molecular tether to connect the endoplasmic reticulum and mitochondria. Components of this complex are involved in the control of mitochondrial shape and protein biogenesis and may function in phospholipid exchange. MDM10 is involved in the late assembly steps of the general translocase of the mitochondrial outer membrane (TOM complex). Functions in the TOM40-specific route of the assembly of outer membrane beta-barrel proteins, including the association of TOM40 with the receptor TOM22 and small TOM proteins. Can associate with the SAM(core) complex as well as the MDM12-MMM1 complex, both involved in late steps of the major beta-barrel assembly pathway, that is responsible for biogenesis of all outer membrane beta-barrel proteins. May act as a switch that shuttles between both complexes and channels precursor proteins into the TOM40-specific pathway. Plays a role in mitochondrial morphology and in the inheritance of mitochondria. This Coprinopsis cinerea (strain Okayama-7 / 130 / ATCC MYA-4618 / FGSC 9003) (Inky cap fungus) protein is Mitochondrial distribution and morphology protein 10.